The chain runs to 250 residues: Functional amyloid subunit FapC (250 aa).

The signal sequence occupies residues 1-24 (MKPTMALKPLVFALAALMAVAAQA). One copy of the FapC_R1 repeat lies at 62–95 (NNAGANGSLSNSKGNLGANIAAGSGNQQDNAAAI). A linker 1 region spans residues 96–126 (TSSAGDAATVFAVADIYQESKDNKFTNKGTQ). A FapC_R2 repeat occupies 127–160 (NNALLNNSANNSSGNVGVNVAAGQGNQQKNNLAI). Positions 161-199 (VTADGKNVAAASNTEQVSLDNHFLNEASSKHSYKPQYVV) are linker 2. One copy of the FapC_R3 repeat lies at 200–233 (NNAGLLNSANNASGNIGVNVAAGAGNQQSNTLTL). Residues 237–240 (CTVC) carry the Cys-X-X-Cys motif.

It belongs to the FapB/FapC family. As to quaternary structure, the major component of purified amyloid fibrils. Forms fibrils in vitro; in the presence of FapA the fibrils are about 50% wider. Interacts with FapA. Fibrillates in vitro; this is inhibited by FapA. Fibrils are resistant to boiling in 2% (weight/vol) SDS and require &gt;90% (vol/vol) formic acid to dissolve.

The protein resides in the fimbrium. The protein localises to the secreted. Functionally, the major functional amyloid subunit in this bacterium. Intrinsically disordered in its monomeric state. Upon overexpression of the endogenous six-gene locus (fapA-fapF) in situ, cells form large clumps during liquid growth, make large amounts of biofilm and produce amyloid fibrils. Expression of the 6 gene operon in E.coli strain BL21(DE3) induces flocculation and biofilm formation with copious extracellular fibrils. This Pseudomonas fluorescens protein is Functional amyloid subunit FapC.